Reading from the N-terminus, the 207-residue chain is Outer-membrane lipoprotein LolB (207 aa).

The first 21 residues, 1–21 (MPLPDFRLIRLLPLAALVLTA), serve as a signal peptide directing secretion. Cys-22 carries N-palmitoyl cysteine lipidation. Cys-22 carries the S-diacylglycerol cysteine lipid modification.

It belongs to the LolB family. Monomer.

The protein localises to the cell outer membrane. Plays a critical role in the incorporation of lipoproteins in the outer membrane after they are released by the LolA protein. The polypeptide is Outer-membrane lipoprotein LolB (Escherichia coli (strain SMS-3-5 / SECEC)).